A 373-amino-acid polypeptide reads, in one-letter code: Cobalt-precorrin-5B C(1)-methyltransferase (373 aa).

This sequence belongs to the CbiD family.

It carries out the reaction Co-precorrin-5B + S-adenosyl-L-methionine = Co-precorrin-6A + S-adenosyl-L-homocysteine. It functions in the pathway cofactor biosynthesis; adenosylcobalamin biosynthesis; cob(II)yrinate a,c-diamide from sirohydrochlorin (anaerobic route): step 6/10. Catalyzes the methylation of C-1 in cobalt-precorrin-5B to form cobalt-precorrin-6A. The protein is Cobalt-precorrin-5B C(1)-methyltransferase of Polaromonas sp. (strain JS666 / ATCC BAA-500).